We begin with the raw amino-acid sequence, 74 residues long: Small ribosomal subunit protein bS18 (74 aa).

Belongs to the bacterial ribosomal protein bS18 family. In terms of assembly, part of the 30S ribosomal subunit. Forms a tight heterodimer with protein bS6.

In terms of biological role, binds as a heterodimer with protein bS6 to the central domain of the 16S rRNA, where it helps stabilize the platform of the 30S subunit. This chain is Small ribosomal subunit protein bS18, found in Thioalkalivibrio sulfidiphilus (strain HL-EbGR7).